The chain runs to 308 residues: MARAMDNAILETILQRVRPLIGQGKVADYIPALASVEGSKLGIAICTVDGQHYQAGDAHERFSIQSISKVLSLVVAMRHYPEEEIWQRVGKDPSGSPFNSLVQLEMEQGIPRNPFINAGALVVCDMLQGRLSAPRQRMLEVVRALCGVSDITYDATVARSEFEHSARNAAIAWLMKSFGNFHHDVPTVLQNYFHYCALKMSCMELARTFVFLANQGEAFHLDEPVVTPMQARQINALMATSGMYQNAGEFAWRVGLPAKSGVGGGIVAIVPHEMAIAVWSPELDPAGNSLAGIAALEQLTQTLGRSVY.

Ser66, Asn117, Glu161, Asn168, Tyr192, Tyr244, and Val262 together coordinate substrate.

It belongs to the glutaminase family. As to quaternary structure, homotetramer.

It carries out the reaction L-glutamine + H2O = L-glutamate + NH4(+). The polypeptide is Glutaminase (Salmonella heidelberg (strain SL476)).